Consider the following 359-residue polypeptide: ELAV-like protein 2 (359 aa).

Residues 1 to 33 form a disordered region; the sequence is METQLSNGPTCNNTANGPTTINNNCSSPVDSGN. RRM domains are found at residues 39–117 and 125–205; these read TNLI…YARP and ANLY…FANN. The residue at position 221 (Ser221) is a Phosphoserine. The RRM 3 domain occupies 276–354; it reads WCIFVYNLAP…RVLQVSFKTN (79 aa).

Belongs to the RRM elav family. As to quaternary structure, interacts with IGF2BP1. Interacts with MAP1B light chain LC1.

Its function is as follows. RNA-binding protein that binds to the 3' untranslated region (3'UTR) of target mRNAs. Seems to recognize a GAAA motif. Can bind to its own 3'UTR, the FOS 3'UTR and the ID 3'UTR. In Pongo abelii (Sumatran orangutan), this protein is ELAV-like protein 2 (ELAVL2).